The sequence spans 873 residues: Bifunctional uridylyltransferase/uridylyl-removing enzyme (873 aa).

Residues 1–332 (MAFQSPLTFN…NGGETEPAVI (332 aa)) form a uridylyltransferase region. Residues 333–692 (INEDFQRRGR…MSKKATRGGT (360 aa)) are uridylyl-removing. Residues 451–573 (VDEHSVRLLN…VRDEERLEYL (123 aa)) enclose the HD domain. 2 consecutive ACT domains span residues 693-773 (EVFV…VKTR) and 800-873 (LMEL…ELAP).

This sequence belongs to the GlnD family. Mg(2+) serves as cofactor.

The enzyme catalyses [protein-PII]-L-tyrosine + UTP = [protein-PII]-uridylyl-L-tyrosine + diphosphate. It catalyses the reaction [protein-PII]-uridylyl-L-tyrosine + H2O = [protein-PII]-L-tyrosine + UMP + H(+). Its activity is regulated as follows. Uridylyltransferase (UTase) activity is inhibited by glutamine, while glutamine activates uridylyl-removing (UR) activity. Modifies, by uridylylation and deuridylylation, the PII regulatory proteins (GlnB and homologs), in response to the nitrogen status of the cell that GlnD senses through the glutamine level. Under low glutamine levels, catalyzes the conversion of the PII proteins and UTP to PII-UMP and PPi, while under higher glutamine levels, GlnD hydrolyzes PII-UMP to PII and UMP (deuridylylation). Thus, controls uridylylation state and activity of the PII proteins, and plays an important role in the regulation of nitrogen assimilation and metabolism. The chain is Bifunctional uridylyltransferase/uridylyl-removing enzyme from Vibrio vulnificus (strain CMCP6).